A 2629-amino-acid polypeptide reads, in one-letter code: Protein DOP1 homolog (2629 aa).

Disordered regions lie at residues 561 to 584 (NKGVPGTHTQGSSLEKSKSDSRLN), 605 to 652 (SASN…TPRS), 688 to 710 (AGNVHDAEEPKSAPPDPQSPQFY), 1278 to 1340 (MDES…SSSA), 1371 to 1395 (TYRLTREKTPGENSLNSVATDQTEH), 1435 to 1471 (ISKTSTDSNLSNSCSQAEPAPEGDPQGEEEATAATDS), and 1766 to 1785 (RQDTPPAAGDDSTGNTSPTR). Polar residues-rich tracts occupy residues 605–615 (SASNQSVGRQS) and 636–647 (ASDTGQQSSSDL). The span at 1307–1320 (DITDNSDSSDFESD) shows a compositional bias: acidic residues. Over residues 1321–1333 (SELRETSLEKEDS) the composition is skewed to basic and acidic residues. Composition is skewed to polar residues over residues 1381–1391 (GENSLNSVATD) and 1435–1450 (ISKTSTDSNLSNSCSQ).

It belongs to the DOP1 family.

It localises to the golgi apparatus membrane. Functionally, may be involved in protein traffic between late Golgi and early endosomes. The protein is Protein DOP1 homolog of Drosophila pseudoobscura pseudoobscura (Fruit fly).